A 320-amino-acid chain; its full sequence is Carbonic anhydrase 6 (320 aa).

A signal peptide spans 1-17 (MRALALLLALPLLGARA). One can recognise an Alpha-carbonic anhydrase domain in the interval 21 to 278 (SLWTYSEGAL…LNGRVVESNF (258 aa)). Cys42 and Cys224 are oxidised to a cystine. The active-site Proton donor/acceptor is His85. Zn(2+)-binding residues include His111, His113, and His138. 220 to 221 (TT) provides a ligand contact to substrate. Asn256 is a glycosylation site (N-linked (GlcNAc...) asparagine).

Belongs to the alpha-carbonic anhydrase family. Zn(2+) serves as cofactor.

Its subcellular location is the secreted. It catalyses the reaction hydrogencarbonate + H(+) = CO2 + H2O. Reversible hydration of carbon dioxide. Its role in saliva is unknown. This is Carbonic anhydrase 6 (CA6) from Canis lupus familiaris (Dog).